Here is a 602-residue protein sequence, read N- to C-terminus: Rho family-interacting cell polarization regulator 2 (602 aa).

A disordered region spans residues 46 to 73 (KKPQAKVKKMHNLGHKNSTTPKEPQPKR). The span at 48–59 (PQAKVKKMHNLG) shows a compositional bias: basic residues. A coiled-coil region spans residues 83 to 112 (NGLDEYLEVHQTELDKLTAQLKDMRRNSRL). The segment at 173–421 (RESLTEINRS…TTAATQHRAL (249 aa)) is necessary for interaction with NCAM and myoblast protrusion formation. The disordered stretch occupies residues 384–474 (GDLPYEDRVP…RSEVCQKPSN (91 aa)). A compositionally biased stretch (polar residues) spans 403–416 (AHVSSSPDITTAAT). A compositionally biased stretch (low complexity) spans 423–437 (SSESSSPDCSSSDSC).

Belongs to the RIPOR family. In terms of assembly, homooligomer; homooligomerization is regulated by RHOC and leads to the formation of concatemers through the association of N- and C-termini. Interacts with NCAM.

The protein localises to the cytoplasm. The protein resides in the cytoskeleton. Its subcellular location is the cell projection. It is found in the filopodium. It localises to the apical cell membrane. The protein localises to the stereocilium. The protein resides in the stereocilium membrane. Its function is as follows. Acts as an inhibitor of the small GTPase RHOA and plays several roles in the regulation of myoblast and hair cell differentiation, lymphocyte T proliferation and neutrophil polarization. Plays a role in fetal mononuclear myoblast differentiation by promoting filopodia and myotube formation. Maintains naive T lymphocytes in a quiescent state and prevents chemokine-induced T lymphocyte responses, such as cell adhesion, polarization and migration. Involved also in the regulation of neutrophil polarization, chemotaxis and adhesion. Required for normal development of inner and outer hair cell stereocilia within the cochlea of the inner ear. Plays a role for maintaining the structural organization of the basal domain of stereocilia. Involved in mechanosensory hair cell function. Required for normal hearing. This Gallus gallus (Chicken) protein is Rho family-interacting cell polarization regulator 2.